The sequence spans 512 residues: MADTVRKKQKLVVVGAGPVGSLAALYAAARGDEVEIYELRGDLRDPSTVPLNFTKSINLALSERGITAMRHSNREDLINNVLRGTIPMHGRMIHGRDRGQLWEAAQAYDVHGRAINAVDRSTLNNALLDELECTPNVKLFFNHKLTGADFNARKAWFERRVPGEAPLPNSANRVPEIEVDFDFMIGADGAHSAARYHMMKFARVDYQQEYIDTLWCEFRIPPTEDGDFRISPNHLHIWPGGEFMFIALPSADKSFTCTLFAPAAHYKHLGSSPQNLVESFKDHFPGVCPELISPGDLQEQFATNPHLPLISLKCKPHHYNSSIVIVGDAAHAVLPFYGQGLNAGLEDIRVLFEFLDKHGSYNLDASPDARREARAKAFQAYTDQRCADTHAINDLSKQNYLEMRWGVKTPLYKLRKSVEEALDRYVPRLGWQTQYSRVSFSNQRYSEVIQSARWQGRILGLGLATTLISTVGVIAYVFWKKPRQHSPGGLLRYSWRRLSSIWVSMFRTIAYA.

This sequence belongs to the aromatic-ring hydroxylase family. KMO subfamily. The cofactor is FAD.

The protein localises to the mitochondrion outer membrane. The enzyme catalyses L-kynurenine + NADPH + O2 + H(+) = 3-hydroxy-L-kynurenine + NADP(+) + H2O. Its pathway is cofactor biosynthesis; NAD(+) biosynthesis; quinolinate from L-kynurenine: step 1/3. Catalyzes the hydroxylation of L-kynurenine (L-Kyn) to form 3-hydroxy-L-kynurenine (L-3OHKyn). Required for synthesis of quinolinic acid. The protein is Kynurenine 3-monooxygenase (bna4) of Neosartorya fischeri (strain ATCC 1020 / DSM 3700 / CBS 544.65 / FGSC A1164 / JCM 1740 / NRRL 181 / WB 181) (Aspergillus fischerianus).